A 359-amino-acid polypeptide reads, in one-letter code: Phosphate acyltransferase (359 aa).

Residues serine 335–alanine 359 form a disordered region.

This sequence belongs to the PlsX family. Homodimer. Probably interacts with PlsY.

It localises to the cytoplasm. The catalysed reaction is a fatty acyl-[ACP] + phosphate = an acyl phosphate + holo-[ACP]. It functions in the pathway lipid metabolism; phospholipid metabolism. Its function is as follows. Catalyzes the reversible formation of acyl-phosphate (acyl-PO(4)) from acyl-[acyl-carrier-protein] (acyl-ACP). This enzyme utilizes acyl-ACP as fatty acyl donor, but not acyl-CoA. The polypeptide is Phosphate acyltransferase (Cupriavidus metallidurans (strain ATCC 43123 / DSM 2839 / NBRC 102507 / CH34) (Ralstonia metallidurans)).